A 205-amino-acid chain; its full sequence is Holliday junction branch migration complex subunit RuvA (205 aa).

A domain I region spans residues 1 to 64 (MIGRLRGVLV…EDAQLLYGFI (64 aa)). Residues 65–143 (TKQERALFRL…SLMEASAGSE (79 aa)) form a domain II region. Residues 144–156 (REFVLQSNYSPAP) are flexible linker. The interval 157–205 (TVNSAEEDAISALISLGYKPPQASKSVSAAYKEGMDSETLIKAALKSML) is domain III.

It belongs to the RuvA family. In terms of assembly, homotetramer. Forms an RuvA(8)-RuvB(12)-Holliday junction (HJ) complex. HJ DNA is sandwiched between 2 RuvA tetramers; dsDNA enters through RuvA and exits via RuvB. An RuvB hexamer assembles on each DNA strand where it exits the tetramer. Each RuvB hexamer is contacted by two RuvA subunits (via domain III) on 2 adjacent RuvB subunits; this complex drives branch migration. In the full resolvosome a probable DNA-RuvA(4)-RuvB(12)-RuvC(2) complex forms which resolves the HJ.

It localises to the cytoplasm. The RuvA-RuvB-RuvC complex processes Holliday junction (HJ) DNA during genetic recombination and DNA repair, while the RuvA-RuvB complex plays an important role in the rescue of blocked DNA replication forks via replication fork reversal (RFR). RuvA specifically binds to HJ cruciform DNA, conferring on it an open structure. The RuvB hexamer acts as an ATP-dependent pump, pulling dsDNA into and through the RuvAB complex. HJ branch migration allows RuvC to scan DNA until it finds its consensus sequence, where it cleaves and resolves the cruciform DNA. This chain is Holliday junction branch migration complex subunit RuvA, found in Shewanella baltica (strain OS223).